The following is a 1009-amino-acid chain: MKVFPAVLFLITFWSLEWEPVLPDSIIHIGAIFDESAKKDDEVFRMAVADLNLNNEILETEKITVSVEFVDGNNPFQAVQEACELMNRGILALVSSIGCMSAGSLQSLADAMHIPHLFIQRAPAGTPRSSCPPTTRAQPDDYTLFVRPPVYLNDVIFQVVMEYTWQKFIIFYDTDYDIRGIENFLDQTSQQGMDVSLQKVESNINMMITGMFRTMRVEELHRYRDTLRRAVLFMSPATAKAFITEVVETNLVAFDCQWIIINEEISDMDVQELVMKSIGRLTLVRQTFPLPQNTSQRCVRNNHRINTSLCDPKDPKAQMLEITNRYIYDTVLLLANTFHRKLEDRKWHSMASLSCIRKGSKPWQGGKSMLETVKKGGVSGLTSLLEFNDNGSNPNIHFEILGTNYGEDRGRGVSRLATWDPIHGLNGTLTDRKLENNMRGVVLRVVTVLEEPFVMVSENVLGKPKKYQGFSIDVLDALANYLGFKYEIYVAPDHKYGSQQADGTWNGLIGELVFKRADVGLSALTITPERESVVDFTTRYMDYSVGVLLRKAERTVDMFACLAPFDLSLWACIAGTVLLVGTLVYLLNWLNPPRLPMGSVSSTTLYNSMWFVYGSFVQQGGEVPYTTLATRMMMGVWWLFALIVISSYTANLAAFLTISRIENSIQSLQDLAKQTDLPYGTVLDSAVYDQVRSKGMNPFERDPMYSQMWRMINRTGGAENNVEESKEGIRKVKYGRFAFVWDAAVLEYVAINDEDCSLYTVSNNVADRGYGMAMQHGSPYRDIFSQRILELQQNGDMDILKLKWWPRDSPCDLYSPVGTRKSGSALDIHSFAGVFFVLAAGVVLSCLIATVETWWTRRKGSRVPSKEDDKEIDLEHLHHRVNSLCTEDESPHKQFSTSSIDLTPLDMDSLPAARQALEQISDFRNTHITTTTFIPEQIQTLSRSLSAKAAAGFAFGAVQDHRTGGPFRQRAPNGGFFRSPVKTMSSIPYQPTPAPNFSYGNDPDRGTSI.

An N-terminal signal peptide occupies residues 1–23 (MKVFPAVLFLITFWSLEWEPVLP). Topologically, residues 24-566 (DSIIHIGAIF…DMFACLAPFD (543 aa)) are extracellular. N-linked (GlcNAc...) asparagine glycosylation is found at asparagine 293, asparagine 306, asparagine 390, and asparagine 426. 3 residues coordinate Ca(2+): glutamate 531, valine 534, and aspartate 535. The helical transmembrane segment at 567 to 587 (LSLWACIAGTVLLVGTLVYLL) threads the bilayer. Over 588 to 635 (NWLNPPRLPMGSVSSTTLYNSMWFVYGSFVQQGGEVPYTTLATRMMMG) the chain is Cytoplasmic. Residues 636–656 (VWWLFALIVISSYTANLAAFL) form a helical membrane-spanning segment. The Extracellular portion of the chain corresponds to 657–830 (TISRIENSIQ…KSGSALDIHS (174 aa)). An N-linked (GlcNAc...) asparagine glycan is attached at asparagine 713. 3 residues coordinate Ca(2+): aspartate 753, aspartate 755, and serine 757. A helical transmembrane segment spans residues 831–851 (FAGVFFVLAAGVVLSCLIATV). The Cytoplasmic segment spans residues 852 to 1009 (ETWWTRRKGS…GNDPDRGTSI (158 aa)). Positions 989 to 1009 (YQPTPAPNFSYGNDPDRGTSI) are disordered.

The protein belongs to the glutamate-gated ion channel (TC 1.A.10.1) family. GRID2 subfamily. Tetramer; dimer of dimers. In terms of tissue distribution, expressed in cerebellar Purkinje cells, in crest cells in the medial octavolateral nucleus and in type I neurons of the optic tectum.

It localises to the postsynaptic cell membrane. It catalyses the reaction Ca(2+)(in) = Ca(2+)(out). The enzyme catalyses Na(+)(in) = Na(+)(out). In terms of biological role, member of the ionotropic glutamate receptor family, which plays a crucial role in synaptic organization and signal transduction in the central nervous system. Although it shares structural features with ionotropic glutamate receptors, does not bind glutamate as a primary ligand. Promotes synaptogenesis and mediates the D-Serine-dependent long term depression signals and AMPA receptor endocytosis of cerebellar parallel fiber-Purkinje cell (PF-PC) synapses through the NRX1B-CBLN1-GRID2 triad complex. In the presence of neurexins and cerebellins, forms cation-selective channels that are proposed to be gated by glycine and D-serine. However, recent research disputes this ligand-gated cation channel activity. Cation-selective ion channel activity can be triggered by GRM1 in Purkinje cells. The chain is Glutamate receptor ionotropic, delta-2 from Danio rerio (Zebrafish).